The chain runs to 226 residues: Small ribosomal subunit protein uS3 (226 aa).

Residues 39–107 (IRAYIKKNVV…EVTLNIKEVK (69 aa)) form the KH type-2 domain.

This sequence belongs to the universal ribosomal protein uS3 family. As to quaternary structure, part of the 30S ribosomal subunit. Forms a tight complex with proteins S10 and S14.

Binds the lower part of the 30S subunit head. Binds mRNA in the 70S ribosome, positioning it for translation. The protein is Small ribosomal subunit protein uS3 of Pelagibacter ubique (strain HTCC1062).